Consider the following 288-residue polypeptide: 33 kDa chaperonin (288 aa).

Intrachain disulfides connect Cys236/Cys238 and Cys269/Cys272.

It belongs to the HSP33 family. Post-translationally, under oxidizing conditions two disulfide bonds are formed involving the reactive cysteines. Under reducing conditions zinc is bound to the reactive cysteines and the protein is inactive.

It localises to the cytoplasm. Redox regulated molecular chaperone. Protects both thermally unfolding and oxidatively damaged proteins from irreversible aggregation. Plays an important role in the bacterial defense system toward oxidative stress. This chain is 33 kDa chaperonin, found in Syntrophotalea carbinolica (strain DSM 2380 / NBRC 103641 / GraBd1) (Pelobacter carbinolicus).